A 1205-amino-acid polypeptide reads, in one-letter code: Solute carrier family 12 member 2 (1205 aa).

At M1 the chain carries N-acetylmethionine. The segment covering 1–22 has biased composition (low complexity); the sequence is MEPGPARPRLAPAARPGWGRAA. Residues 1 to 102 form a disordered region; sequence MEPGPARPRL…AAAAAAAAAA (102 aa). Residues 1-279 lie on the Cytoplasmic side of the membrane; the sequence is MEPGPARPRL…AESKGVVKFG (279 aa). The span at 23–35 shows a compositional bias: basic residues; that stretch reads GCRRRGGPARHGR. A phosphoserine mark is found at S74 and S76. The RFXV motif 1 motif lies at 77–80; that stretch reads RFQV. Low complexity predominate over residues 87–102; it reads AGRAAAAAAAAAAAAA. The short motif at 133–136 is the RFXV motif 2 element; the sequence is RFRV. A compositionally biased stretch (low complexity) spans 143 to 155; the sequence is ASSSADDSLSDAA. The segment at 143-187 is disordered; the sequence is ASSSADDSLSDAAGVGGDGPNVSFQNGGDTVLSEGSSLHSGGGSG. Residues T196, T200, T205, T210, and T223 each carry the phosphothreonine modification. The residue at position 235 (S235) is a Phosphoserine. The residue at position 259 (T259) is a Phosphothreonine. Residues 280 to 309 traverse the membrane as a discontinuously helical segment; sequence WIKGVLVRCMLNIWGVMLFIRLSWIVGQAG. Position 290 (L290) interacts with Na(+). K(+)-binding residues include N291 and I292. W293 contacts Na(+). Residues G294, V295, and M296 each contribute to the chloride site. A helical transmembrane segment spans residues 310 to 329; that stretch reads IGLSVVVIAMATVVTTITGL. The Cytoplasmic portion of the chain corresponds to 330–360; sequence STSAIATNGFVRGGGAYYLISRSLGPEFGGA. A helical transmembrane segment spans residues 361–388; the sequence is IGLIFAFANAVAVAMYVVGFAETVVELL. Position 365 (F365) interacts with chloride. K(+) is bound at residue Y376. The Extracellular segment spans residues 389-398; sequence KEHSILMIDE. The helical transmembrane segment at 399–422 threads the bilayer; it reads INDIRIIGAITVVILLGISVAGME. Topologically, residues 423–425 are cytoplasmic; sequence WEA. The helical transmembrane segment at 426–447 threads the bilayer; it reads KAQIVLLVILLLAIADFVIGTF. The Extracellular segment spans residues 448-479; that stretch reads ISLESKKPKGFFGYKSEIFNENFGPDFREEET. Residues 480 to 497 traverse the membrane as a discontinuously helical segment; that stretch reads FFSVFAIFFPAATGILAG. K(+) contacts are provided by P489, A490, and T492. P489 and A490 together coordinate chloride. Positions 493 and 494 each coordinate chloride. Residues 498-512 are Cytoplasmic-facing; that stretch reads ANISGDLADPQSAIP. Residues 513-534 form a helical membrane-spanning segment; the sequence is KGTLLAILITTVVYIGIAVSVG. The Extracellular portion of the chain corresponds to 535–591; the sequence is SCVVRDATGNVNDTITTELTNCTSAACKLNFDFSYCESNTCSYGLMNNFQVMSMVSG. N-linked (GlcNAc...) asparagine glycans are attached at residues N546 and N555. 2 disulfide bridges follow: C556-C561 and C570-C575. The chain crosses the membrane as a helical span at residues 592-616; the sequence is FAPLISAGIFSATLSSALASLVSAP. The Na(+) site is built by A603, S606, and S607. Topologically, residues 617 to 644 are cytoplasmic; the sequence is KIFQALCKDNIYPAFQMFAKGYGKNNEP. 2 consecutive transmembrane segments (helical) span residues 645-665 and 666-684; these read LRGYILTFLIALGFILIAELN and VIAPIISNFFLASYALINF. 2 residues coordinate chloride: F675 and Y679. At 685-707 the chain is on the cytoplasmic side; sequence SVFHASLAKSPGWRPAFKYYNMW. Transmembrane regions (helical) follow at residues 708–725 and 726–738; these read ISLIGAILCCIVMFVINW and WAALLTYVIVLGL. The Cytoplasmic portion of the chain corresponds to 739–1205; it reads YIYVTYKKPD…NHQSVLTFYS (467 aa). The segment at 754–771 is scissor helix; that stretch reads STQALTYLSALQHSIRLS. 2 positions are modified to phosphoserine: S933 and S937. A disordered region spans residues 953–986; it reads SDQDTCKSSGEKSITQKDEEEDGKTPTQPLLKKE. S987 carries the post-translational modification Phosphoserine.

This sequence belongs to the SLC12A transporter family. Homodimer; adopts a domain-swap conformation at the scissor helices connecting the transmembrane domain and C-terminal domain. Phosphorylated at Thr-196, Thr-200 and Thr-205 by OXSR1/OSR1 and STK39/SPAK downstream of WNK kinases (WNK1, WNK2, WNK3 or WNK4), promoting its activity. Widely expressed. High expression found in the cochlea, cochlear lateral wall, and the choroid plexus. Lower expression found in the cerebellum and the cortex.

The protein localises to the basolateral cell membrane. The catalysed reaction is K(+)(out) + 2 chloride(out) + Na(+)(out) = K(+)(in) + 2 chloride(in) + Na(+)(in). With respect to regulation, activated following phosphorylation by OXSR1/OSR1 and STK39/SPAK downstream of WNK kinases (WNK1, WNK2, WNK3 or WNK4). Inhibited by bumetanide and furosemide. Cation-chloride cotransporter which mediates the electroneutral transport of chloride, potassium and/or sodium ions across the membrane. Plays a vital role in the regulation of ionic balance and cell volume. This is Solute carrier family 12 member 2 (Slc12a2) from Mus musculus (Mouse).